The following is a 171-amino-acid chain: Large ribosomal subunit protein bL17 (171 aa).

The tract at residues proline 130–lysine 171 is disordered. Positions lysine 133–lysine 149 are enriched in basic residues. The span at alanine 150–alanine 165 shows a compositional bias: low complexity.

This sequence belongs to the bacterial ribosomal protein bL17 family. In terms of assembly, part of the 50S ribosomal subunit. Contacts protein L32.

The sequence is that of Large ribosomal subunit protein bL17 from Opitutus terrae (strain DSM 11246 / JCM 15787 / PB90-1).